The following is a 44-amino-acid chain: Thymosin beta-4 (44 aa).

Basic and acidic residues-rich tracts occupy residues 1–25 and 33–44; these read MSDKPDMAEIEKFDKAKLKKTETQE and ETIEQEKQTSES. The disordered stretch occupies residues 1–44; the sequence is MSDKPDMAEIEKFDKAKLKKTETQEKNPLPSKETIEQEKQTSES. The residue at position 2 (Ser-2) is an N-acetylserine.

Belongs to the thymosin beta family. Spleen, kidney, heart, and oocytes.

The protein resides in the cytoplasm. It localises to the cytoskeleton. In terms of biological role, plays an important role in the organization of the cytoskeleton. Binds to and sequesters actin monomers (G actin) and therefore inhibits actin polymerization. The protein is Thymosin beta-4 (tmsb4) of Xenopus laevis (African clawed frog).